A 117-amino-acid polypeptide reads, in one-letter code: Immunoglobulin heavy variable 1-45 (117 aa).

The first 19 residues, 1-19, serve as a signal peptide directing secretion; it reads MDWTWRILFLVAAVTDAYS. A framework-1 region spans residues 20–44; that stretch reads QMQLVQSGAEVKKTGSSVKVSCKAS. The Ig-like domain occupies 20 to 117; the sequence is QMQLVQSGAE…EDTAMYYCAR (98 aa). A disulfide bond links Cys-41 and Cys-115. The segment at 45–52 is complementarity-determining-1; that stretch reads GYTFTYRY. Residues 53 to 69 are framework-2; that stretch reads LHWVRQAPGQALEWMGW. Residues 70-77 form a complementarity-determining-2 region; it reads ITPFNGNT. A framework-3 region spans residues 78–115; that stretch reads NYAQKFQDRVTITRDRSMSTAYMELSSLRSEDTAMYYC. Residues 116–117 are complementarity-determining-3; the sequence is AR.

In terms of assembly, immunoglobulins are composed of two identical heavy chains and two identical light chains; disulfide-linked.

It is found in the secreted. Its subcellular location is the cell membrane. Functionally, v region of the variable domain of immunoglobulin heavy chains that participates in the antigen recognition. Immunoglobulins, also known as antibodies, are membrane-bound or secreted glycoproteins produced by B lymphocytes. In the recognition phase of humoral immunity, the membrane-bound immunoglobulins serve as receptors which, upon binding of a specific antigen, trigger the clonal expansion and differentiation of B lymphocytes into immunoglobulins-secreting plasma cells. Secreted immunoglobulins mediate the effector phase of humoral immunity, which results in the elimination of bound antigens. The antigen binding site is formed by the variable domain of one heavy chain, together with that of its associated light chain. Thus, each immunoglobulin has two antigen binding sites with remarkable affinity for a particular antigen. The variable domains are assembled by a process called V-(D)-J rearrangement and can then be subjected to somatic hypermutations which, after exposure to antigen and selection, allow affinity maturation for a particular antigen. The protein is Immunoglobulin heavy variable 1-45 of Homo sapiens (Human).